Here is a 68-residue protein sequence, read N- to C-terminus: Large ribosomal subunit protein uL29 (68 aa).

This sequence belongs to the universal ribosomal protein uL29 family.

This Rhodopseudomonas palustris (strain BisA53) protein is Large ribosomal subunit protein uL29.